The primary structure comprises 1025 residues: Collagen alpha-1(VI) chain (1025 aa).

A signal peptide spans 1 to 19 (MRLAHALLPLLLQACWVAT). The segment at 20 to 255 (QDIQGSKAIA…CCSFECQAAR (236 aa)) is N-terminal globular domain. Positions 36 to 234 (DLFFVLDTSE…EVISQTIDTI (199 aa)) constitute a VWFA 1 domain. A glycan (N-linked (GlcNAc...) asparagine) is linked at asparagine 211. A disordered region spans residues 252–588 (QAARGPPGPR…QGPPGHVGPP (337 aa)). Residues 256-591 (GPPGPRGDPG…PGHVGPPGPD (336 aa)) are triple-helical region. A Cell attachment site motif is present at residues 261-263 (RGD). Composition is skewed to basic and acidic residues over residues 267–284 (EGERGKPGLPGEKGEAGD) and 300–333 (KGEKGSRGEKGSRGPKGYKGEKGKRGIDGVDGMK). Short sequence motifs (cell attachment site) lie at residues 441–443 (RGD) and 477–479 (RGD). 2 N-linked (GlcNAc...) asparagine glycosylation sites follow: asparagine 515 and asparagine 536. Residues 549–559 (GEVGDPGEDNN) are compositionally biased toward acidic residues. A compositionally biased stretch (pro residues) spans 578-588 (PQGPPGHVGPP). Residues 592–1025 (ECEILDIIMK…QTVSRKVALG (434 aa)) are C-terminal globular domain. 2 consecutive VWFA domains span residues 614–802 (DILF…LKNI) and 826–1018 (DITI…YQTV). N-linked (GlcNAc...) asparagine glycans are attached at residues asparagine 801 and asparagine 893.

The protein belongs to the type VI collagen family. As to quaternary structure, trimers composed of three different chains: alpha-1(VI), alpha-2(VI), and alpha-3(VI) or alpha-4(VI) or alpha-5(VI) or alpha-6(VI). Post-translationally, prolines at the third position of the tripeptide repeating unit (G-X-Y) are hydroxylated in some or all of the chains.

The protein resides in the secreted. It localises to the extracellular space. It is found in the extracellular matrix. In terms of biological role, collagen VI acts as a cell-binding protein. This Mus musculus (Mouse) protein is Collagen alpha-1(VI) chain (Col6a1).